The following is a 93-amino-acid chain: MNYVYILKCKDESLYTGWTNNLEKRIKAHNNGCGAKYTRGRGPVKLVYFEFFENKREAQSREYYIKKLTRNQKLQLISSKSIKEENYEKEINL.

The GIY-YIG domain occupies 1–75 (MNYVYILKCK…KKLTRNQKLQ (75 aa)).

It belongs to the UPF0213 family.

The sequence is that of UPF0213 protein CPE1444 from Clostridium perfringens (strain 13 / Type A).